Consider the following 116-residue polypeptide: MNKDSTQTWGLKRDITPCFGARLVQEGHRLHFLADRAGFTGSFSEVQTLQLDEAFPHFVAHLELMLLSCELNPRYAHCVTLYRNGLTGEADTLGSHGYVYIAILNRHGFNRHLRVI.

The protein belongs to the CbeA/YafW/YfjZ antitoxin family.

Putative antitoxin component of a type IV toxin-antitoxin (TA) system; its cognate toxin is unknown. In Escherichia coli (strain K12), this protein is Orphan antitoxin YagB (yagB).